The primary structure comprises 150 residues: MIMNYNVIDKIDVFDIIRHIKDPEFPKTLEELKVVNEDWITVIDNNDINDSDDINNNNNENYKGYCFIKILFQPTVPHCHLAPTIALCIREKIKEYLPKRSKIEIYIKKGTHQTEDEINKQINDKERIIAALENPEIFQLVKKCIKEDDY.

It belongs to the MIP18 family.

Functionally, may play a role in chromosome segregation through establishment of sister chromatid cohesion. The sequence is that of MIP18 family protein FAM96A (fam96A) from Dictyostelium discoideum (Social amoeba).